Reading from the N-terminus, the 218-residue chain is Testis expressed protein 56 (218 aa).

This is Testis expressed protein 56 (Tex56) from Rattus norvegicus (Rat).